Here is a 288-residue protein sequence, read N- to C-terminus: Ribosomal RNA small subunit methyltransferase A (288 aa).

The S-adenosyl-L-methionine site is built by asparagine 18, leucine 20, glycine 45, glutamate 66, aspartate 91, and asparagine 118.

This sequence belongs to the class I-like SAM-binding methyltransferase superfamily. rRNA adenine N(6)-methyltransferase family. RsmA subfamily.

Its subcellular location is the cytoplasm. The catalysed reaction is adenosine(1518)/adenosine(1519) in 16S rRNA + 4 S-adenosyl-L-methionine = N(6)-dimethyladenosine(1518)/N(6)-dimethyladenosine(1519) in 16S rRNA + 4 S-adenosyl-L-homocysteine + 4 H(+). Functionally, specifically dimethylates two adjacent adenosines (A1518 and A1519) in the loop of a conserved hairpin near the 3'-end of 16S rRNA in the 30S particle. May play a critical role in biogenesis of 30S subunits. The protein is Ribosomal RNA small subunit methyltransferase A of Mannheimia succiniciproducens (strain KCTC 0769BP / MBEL55E).